Reading from the N-terminus, the 121-residue chain is Large ribosomal subunit protein bL12 (121 aa).

It belongs to the bacterial ribosomal protein bL12 family. In terms of assembly, homodimer. Part of the ribosomal stalk of the 50S ribosomal subunit. Forms a multimeric L10(L12)X complex, where L10 forms an elongated spine to which 2 to 4 L12 dimers bind in a sequential fashion. Binds GTP-bound translation factors.

Its function is as follows. Forms part of the ribosomal stalk which helps the ribosome interact with GTP-bound translation factors. Is thus essential for accurate translation. This Tremblaya princeps protein is Large ribosomal subunit protein bL12.